A 775-amino-acid chain; its full sequence is Chloride channel protein CLC-a (775 aa).

Positions 1 to 28 are disordered; it reads MDEDGNLQISNSNYNGEEEGEDPENNTL. Transmembrane regions (helical) follow at residues 88–108, 131–151, 178–198, 206–226, 248–268, 278–298, 328–348, 371–391, 453–473, 478–498, 510–530, and 531–551; these read TLAC…NLAV, GLMV…VLVV, FGFT…AAGL, LVHI…DNHR, GSAS…LFAL, ALLW…RAFI, AADI…GSLY, VLLS…LPFL, MVSL…TFGI, GLFL…GTAM, AVLG…SLCV, and IFLE…VLLI. CBS domains are found at residues 595-658 and 703-768; these read AKPP…FLNE and TNTT…HLDK. A helical membrane pass occupies residues 730 to 750; sequence HLLVVPKIQASGMSPVIGILT.

It belongs to the chloride channel (TC 2.A.49) family. In terms of assembly, homodimer. Interacts with PP2A5. In terms of tissue distribution, broadly expressed in the plant.

It is found in the membrane. Its function is as follows. Voltage-gated chloride channel that could play a role in the regulation of nitrate content. This Arabidopsis thaliana (Mouse-ear cress) protein is Chloride channel protein CLC-a (CLC-A).